We begin with the raw amino-acid sequence, 501 residues long: Acetylcholine receptor subunit beta (501 aa).

The signal sequence occupies residues 1–23; it reads MTPGALLMLLGALGAPLAPGVRG. Residues 24 to 244 lie on the Extracellular side of the membrane; it reads SEAEGRLREK…VIFYLIIRRK (221 aa). The cysteines at positions 151 and 165 are disulfide-linked. N-linked (GlcNAc...) asparagine glycosylation occurs at Asn-164. 3 helical membrane passes run 245–269, 277–295, and 311–332; these read PLFY…VFYL, MGLS…LLLA, and YLMF…VLNL. The Cytoplasmic portion of the chain corresponds to 333 to 469; it reads HHRSPHTHQM…WQFVAMVVDR (137 aa). Tyr-390 carries the post-translational modification Phosphotyrosine; by Tyr-kinases. A helical transmembrane segment spans residues 470–488; it reads LFLWTFIIFTSVGTLVIFL.

Belongs to the ligand-gated ion channel (TC 1.A.9) family. Acetylcholine receptor (TC 1.A.9.1) subfamily. Beta-1/CHRNB1 sub-subfamily. Pentamer of two alpha chains, and one each of the beta, delta, and gamma (in immature muscle) or epsilon (in mature muscle) chains. The muscle heteropentamer composed of alpha-1, beta-1, delta, epsilon subunits interacts with the alpha-conotoxin ImII.

It is found in the postsynaptic cell membrane. It localises to the cell membrane. The catalysed reaction is K(+)(in) = K(+)(out). It carries out the reaction Na(+)(in) = Na(+)(out). After binding acetylcholine, the AChR responds by an extensive change in conformation that affects all subunits and leads to opening of an ion-conducting channel across the plasma membrane. In Homo sapiens (Human), this protein is Acetylcholine receptor subunit beta.